Here is a 57-residue protein sequence, read N- to C-terminus: Large ribosomal subunit protein bL32c (57 aa).

Belongs to the bacterial ribosomal protein bL32 family.

The protein resides in the plastid. The protein localises to the chloroplast. The sequence is that of Large ribosomal subunit protein bL32c from Phalaenopsis aphrodite subsp. formosana (Moth orchid).